Here is a 340-residue protein sequence, read N- to C-terminus: Dual specificity protein phosphatase 12 (340 aa).

Methionine 1 carries the N-acetylmethionine modification. One can recognise a Tyrosine-protein phosphatase domain in the interval glutamine 26–glutamate 171. The active-site Phosphocysteine intermediate is the cysteine 115. Residue histidine 116–arginine 121 coordinates substrate. A Phosphoserine modification is found at serine 335.

This sequence belongs to the protein-tyrosine phosphatase family. Non-receptor class dual specificity subfamily. Monomer. Zn(2+) serves as cofactor. In terms of tissue distribution, ubiquitous, highest expression in spleen, testis, ovary, and peripheral blood leukocytes and lower expression in liver and lung.

The protein resides in the nucleus. It is found in the cytoplasm. Its subcellular location is the cytosol. The catalysed reaction is O-phospho-L-tyrosyl-[protein] + H2O = L-tyrosyl-[protein] + phosphate. The enzyme catalyses O-phospho-L-seryl-[protein] + H2O = L-seryl-[protein] + phosphate. It carries out the reaction O-phospho-L-threonyl-[protein] + H2O = L-threonyl-[protein] + phosphate. Dual specificity phosphatase; can dephosphorylate both phosphotyrosine and phosphoserine or phosphothreonine residues. Can dephosphorylate glucokinase (in vitro). Has phosphatase activity with the synthetic substrate 6,8-difluoro-4-methylumbelliferyl phosphate and other in vitro substrates. The sequence is that of Dual specificity protein phosphatase 12 (DUSP12) from Homo sapiens (Human).